The chain runs to 307 residues: MSDFEMEDSASGYDSGDNSDAELQAAFERGDLKPGLNVEFNGQRDKVNDVTKLLAKTEAIKMQLPWLERLDMINTLAPLAPELAVQLEKHEQKRANLFKGNAKLPYIRPEEDPVLNDFKREMLFHRQAQSAVLEAIPRLHELGIKTRRPDDYFAEMAKSDEHMQKVRANLMAKQQGQAKSERIKQIREQRKMGKMLAKQTKVQREAEKKDMLDKLKKFRKGKLKNLDFLEDAKALESKQKQSAENRKKRNKKFGFGGKKKGLKRNTKSSSAGLDGDKSSRRQRGVKAGASVNKRLGKSRRIKAKGRK.

Disordered regions lie at residues 1 to 22, 189 to 208, and 236 to 307; these read MSDFEMEDSASGYDSGDNSDAE, QRKMGKMLAKQTKVQREAEK, and ESKQ…KGRK. A coiled-coil region spans residues 205 to 252; sequence EAEKKDMLDKLKKFRKGKLKNLDFLEDAKALESKQKQSAENRKKRNKK. The span at 236-245 shows a compositional bias: basic and acidic residues; that stretch reads ESKQKQSAEN. Basic residues-rich tracts occupy residues 246 to 266 and 294 to 307; these read RKKRNKKFGFGGKKKGLKRNT and RLGKSRRIKAKGRK.

It belongs to the EBP2 family.

It localises to the nucleus. The protein resides in the nucleolus. Its function is as follows. Required for the processing of the 27S pre-rRNA. This is Probable rRNA-processing protein EBP2 homolog from Drosophila melanogaster (Fruit fly).